A 435-amino-acid polypeptide reads, in one-letter code: Methylenetetrahydrofolate--tRNA-(uracil-5-)-methyltransferase TrmFO (435 aa).

9 to 14 (GAGLAG) contacts FAD.

The protein belongs to the MnmG family. TrmFO subfamily. Requires FAD as cofactor.

The protein resides in the cytoplasm. The enzyme catalyses uridine(54) in tRNA + (6R)-5,10-methylene-5,6,7,8-tetrahydrofolate + NADH + H(+) = 5-methyluridine(54) in tRNA + (6S)-5,6,7,8-tetrahydrofolate + NAD(+). It carries out the reaction uridine(54) in tRNA + (6R)-5,10-methylene-5,6,7,8-tetrahydrofolate + NADPH + H(+) = 5-methyluridine(54) in tRNA + (6S)-5,6,7,8-tetrahydrofolate + NADP(+). In terms of biological role, catalyzes the folate-dependent formation of 5-methyl-uridine at position 54 (M-5-U54) in all tRNAs. The protein is Methylenetetrahydrofolate--tRNA-(uracil-5-)-methyltransferase TrmFO of Staphylococcus haemolyticus (strain JCSC1435).